The following is a 585-amino-acid chain: FAD-linked oxidoreductase apf9 (585 aa).

Positions 1–19 are cleaved as a signal peptide; it reads MKPHTVSLVLSNLASLAAA. N-linked (GlcNAc...) asparagine glycans are attached at residues asparagine 40, asparagine 92, and asparagine 117. An FAD-binding PCMH-type domain is found at 108-294; that stretch reads IGNSPVYVVN…TEITVKTYPT (187 aa). Histidine 145 carries the post-translational modification Pros-8alpha-FAD histidine. Residues asparagine 352, asparagine 412, and asparagine 495 are each glycosylated (N-linked (GlcNAc...) asparagine).

The protein belongs to the oxygen-dependent FAD-linked oxidoreductase family. The cofactor is FAD.

It functions in the pathway secondary metabolite biosynthesis. Its function is as follows. FAD-linked oxidoreductase; part of the gene cluster that mediates the biosynthesis of the cyclic tetrapeptide apicidin F (APF). The non-ribosomal peptide synthetase apf1 incorporates four different amino acids to produce apicidin F: L-phenylalanine, D-pipecolic acid (D-pip), N-methoxy-L-tryptophan and L-2-aminooctanedioic acid. L-Phenylalanine is the only proteinogenic amino acid directly used by apf1. The 3 other apf1 substrates are non-proteinogenic and have to be modified by other enzymes of the cluster. Lysine is converted to delta-1-pyrroline-5-carboxylate (P5C) which is reduced to L-pipecolic acid (L-pip) by apf3. L-pip is epimerized to D-pip, probably by apf1 activity, prior to incorporation. L-Tryptophan is N-oxidyzed by one of the cytochrome P450 monooxygenases (apf7 or apf8), and further methylated at the hydroxy group by the O-methyltransferase apf6 to yield N-methoxy-L-tryptophan. The synthesis of the fourth apf1 substrate is more complex. The fatty acid synthase apf5 is involved in the synthesis of the octanoic acid backbone of L-2-aminooctanedioic acid by fixing one acetyl-CoA unit and three malonyl-CoA units. Then one of the cytochrome P450 monooxygenases (apf7 or apf8) may oxidize this backbone to 2-oxooctanoic acid. The aminotransferase apf4 is predicted to catalyze the exchange of the keto group with an amino group. The next step would be the oxidation of 2-aminooctanoic acid by one of the cytochrome P450 monooxygenases (apf7 or apf8). The last step is the oxidation of 2-amino-8-hydroxyoctanoic acid to 2-aminooctanedioic acid is catalyzed by the FAD-dependent monooxygenase apf9. The chain is FAD-linked oxidoreductase apf9 from Gibberella fujikuroi (strain CBS 195.34 / IMI 58289 / NRRL A-6831) (Bakanae and foot rot disease fungus).